Here is a 311-residue protein sequence, read N- to C-terminus: tRNA dimethylallyltransferase (311 aa).

10–17 (GPTAVGKT) contributes to the ATP binding site. Residue 12-17 (TAVGKT) participates in substrate binding. The tract at residues 35–38 (DSMQ) is interaction with substrate tRNA.

Belongs to the IPP transferase family. Monomer. Mg(2+) serves as cofactor.

It catalyses the reaction adenosine(37) in tRNA + dimethylallyl diphosphate = N(6)-dimethylallyladenosine(37) in tRNA + diphosphate. Functionally, catalyzes the transfer of a dimethylallyl group onto the adenine at position 37 in tRNAs that read codons beginning with uridine, leading to the formation of N6-(dimethylallyl)adenosine (i(6)A). This is tRNA dimethylallyltransferase from Anoxybacillus flavithermus (strain DSM 21510 / WK1).